A 317-amino-acid polypeptide reads, in one-letter code: Apolipoprotein E (317 aa).

The signal sequence occupies residues 1-18 (MKVLWAALLVTFLAGCQA). 8 tandem repeats follow at residues 80 to 101 (TLMD…EQLS), 102 to 123 (PVAE…ARLG), 124 to 145 (ADME…AMLG), 146 to 167 (QSTE…KRLL), 168 to 189 (RDAD…EGAE), 190 to 211 (RGVS…VRAA), 212 to 233 (TVGS…ERLR), and 234 to 255 (ARME…EQVA). The interval 80 to 255 (TLMDETMKEL…RLDEVKEQVA (176 aa)) is 8 X 22 AA approximate tandem repeats. Met-143 is subject to Methionine sulfoxide. Ser-147 carries the post-translational modification Phosphoserine. Residues 158-168 (HLRKLRKRLLR) form an LDL and other lipoprotein receptors binding region. Position 162 to 165 (162 to 165 (LRKR)) interacts with heparin. Positions 210–290 (AATVGSLAGQ…SWFEPLVEDM (81 aa)) are lipid-binding and lipoprotein association. Residue 229-236 (GERLRARM) participates in heparin binding. The interval 266–317 (QQISLQAEAFQARLKSWFEPLVEDMQRQWAGLVEKVQAAVGASTAPVPSDNH) is homooligomerization. The specificity for association with VLDL stretch occupies residues 278–290 (RLKSWFEPLVEDM).

The protein belongs to the apolipoprotein A1/A4/E family. As to quaternary structure, homotetramer. May interact with ABCA1; functionally associated with ABCA1 in the biogenesis of HDLs. May interact with APP/A4 amyloid-beta peptide; the interaction is extremely stable in vitro but its physiological significance is unclear. May interact with MAPT. May interact with MAP2. In the cerebrospinal fluid, interacts with secreted SORL1. Interacts with PMEL; this allows the loading of PMEL luminal fragment on ILVs to induce fibril nucleation. APOE exists as multiple glycosylated and sialylated glycoforms within cells and in plasma. The extent of glycosylation and sialylation are tissue and context specific. Post-translationally, glycated in plasma VLDL. In terms of processing, phosphorylated by FAM20C in the extracellular medium.

The protein resides in the secreted. It is found in the extracellular space. Its subcellular location is the extracellular matrix. It localises to the extracellular vesicle. The protein localises to the endosome. The protein resides in the multivesicular body. Its function is as follows. APOE is an apolipoprotein, a protein associating with lipid particles, that mainly functions in lipoprotein-mediated lipid transport between organs via the plasma and interstitial fluids. APOE is a core component of plasma lipoproteins and is involved in their production, conversion and clearance. Apolipoproteins are amphipathic molecules that interact both with lipids of the lipoprotein particle core and the aqueous environment of the plasma. As such, APOE associates with chylomicrons, chylomicron remnants, very low density lipoproteins (VLDL) and intermediate density lipoproteins (IDL) but shows a preferential binding to high-density lipoproteins (HDL). It also binds a wide range of cellular receptors including the LDL receptor/LDLR, the LDL receptor-related proteins LRP1, LRP2 and LRP8 and the very low-density lipoprotein receptor/VLDLR that mediate the cellular uptake of the APOE-containing lipoprotein particles. Finally, APOE also has a heparin-binding activity and binds heparan-sulfate proteoglycans on the surface of cells, a property that supports the capture and the receptor-mediated uptake of APOE-containing lipoproteins by cells. A main function of APOE is to mediate lipoprotein clearance through the uptake of chylomicrons, VLDLs, and HDLs by hepatocytes. APOE is also involved in the biosynthesis by the liver of VLDLs as well as their uptake by peripheral tissues ensuring the delivery of triglycerides and energy storage in muscle, heart and adipose tissues. By participating in the lipoprotein-mediated distribution of lipids among tissues, APOE plays a critical role in plasma and tissues lipid homeostasis. APOE is also involved in two steps of reverse cholesterol transport, the HDLs-mediated transport of cholesterol from peripheral tissues to the liver, and thereby plays an important role in cholesterol homeostasis. First, it is functionally associated with ABCA1 in the biogenesis of HDLs in tissues. Second, it is enriched in circulating HDLs and mediates their uptake by hepatocytes. APOE also plays an important role in lipid transport in the central nervous system, regulating neuron survival and sprouting. The polypeptide is Apolipoprotein E (APOE) (Colobus guereza (Mantled guereza)).